A 634-amino-acid polypeptide reads, in one-letter code: Threonine--tRNA ligase (634 aa).

Residues 1 to 61 (MINIRFPDGS…NSNCELRLIT (61 aa)) form the TGS domain. The catalytic stretch occupies residues 241–532 (DHRKIGKVLD…LIEHYAGNLP (292 aa)). Cys-332, His-383, and His-509 together coordinate Zn(2+).

The protein belongs to the class-II aminoacyl-tRNA synthetase family. As to quaternary structure, homodimer. The cofactor is Zn(2+).

It is found in the cytoplasm. It catalyses the reaction tRNA(Thr) + L-threonine + ATP = L-threonyl-tRNA(Thr) + AMP + diphosphate + H(+). Its function is as follows. Catalyzes the attachment of threonine to tRNA(Thr) in a two-step reaction: L-threonine is first activated by ATP to form Thr-AMP and then transferred to the acceptor end of tRNA(Thr). Also edits incorrectly charged L-seryl-tRNA(Thr). This chain is Threonine--tRNA ligase, found in Francisella tularensis subsp. mediasiatica (strain FSC147).